The primary structure comprises 946 residues: Villin-4 (946 aa).

Gelsolin-like repeat units follow at residues 28-109 (NFKP…ETEK), 152-219 (VHVK…EDGK), 274-339 (LEHE…TIMF), and 641-715 (EIHH…PQFF). Disordered regions lie at residues 744-783 (ATPS…ERHR) and 846-902 (TKST…PAPD). The segment covering 765–777 (QDKSQQRTRSMSH) has biased composition (polar residues). A compositionally biased stretch (acidic residues) spans 874–883 (SENEPEDDEN). In terms of domain architecture, HP spans 881 to 946 (DENSTIYPYE…NRLKSDLQLF (66 aa)).

Belongs to the villin/gelsolin family.

The protein localises to the cytoplasm. Its subcellular location is the cytoskeleton. Ca(2+)-regulated actin-binding protein. Binds actin microfilaments (MFs). Involved in actin filament bundling, severing and capping. Caps the barbed end of actin filaments and is able to sever them in a calcium-dependent manner. This Oryza sativa subsp. indica (Rice) protein is Villin-4.